The following is a 449-amino-acid chain: Alpha-L-fucosidase (449 aa).

Residues 1–19 form the signal peptide; that stretch reads MGLLLLLSLLSACFQPRYA. Residues asparagine 156, asparagine 224, asparagine 362, and asparagine 375 are each glycosylated (N-linked (GlcNAc...) asparagine).

Belongs to the glycosyl hydrolase 29 family. In terms of assembly, homotetramer.

It is found in the secreted. It catalyses the reaction an alpha-L-fucoside + H2O = L-fucose + an alcohol. Its function is as follows. Alpha-L-fucosidase is responsible for hydrolyzing the alpha-1,6-linked fucose joined to the reducing-end N-acetylglucosamine of the carbohydrate moieties of glycoproteins. The polypeptide is Alpha-L-fucosidase (Branchiostoma floridae (Florida lancelet)).